A 294-amino-acid polypeptide reads, in one-letter code: MSDAAAAPPERKKRTITEIRDSKKSGEKMVYTSVPDYTSAKWAELAGVDVAVVGDSLAMVAHGHSSTVPATMDMMVMHAQAVRRGAPRTFTLGCMPYQSYNTVDRALLNATRFMQDGGCDAVKPQGGRSQAHILKALVDSGIPTASHIGLTPHTIAMFGGFKIQGRTAEAAMKILEDAFAIQDAGCFMLEFEAVPAKIATLISKQLEIPTIGIGAGAGCDGQILLSYDLLGVFTDFKPKFTKRYANLTEVAVQGLKAYVDEVKTGRFPDDDHSYGVDDREYEQFMNLVEKRRHV.

D55 contributes to the Mg(2+) binding site. 3-methyl-2-oxobutanoate contacts are provided by residues 55–56 and K123; that span reads DS. The active-site Proton acceptor is the E192.

This sequence belongs to the PanB family. As to quaternary structure, homodecamer; pentamer of dimers. Mg(2+) is required as a cofactor.

The protein resides in the cytoplasm. The enzyme catalyses 3-methyl-2-oxobutanoate + (6R)-5,10-methylene-5,6,7,8-tetrahydrofolate + H2O = 2-dehydropantoate + (6S)-5,6,7,8-tetrahydrofolate. It participates in cofactor biosynthesis; (R)-pantothenate biosynthesis; (R)-pantoate from 3-methyl-2-oxobutanoate: step 1/2. Catalyzes the reversible reaction in which hydroxymethyl group from 5,10-methylenetetrahydrofolate is transferred onto alpha-ketoisovalerate to form ketopantoate. In Methylibium petroleiphilum (strain ATCC BAA-1232 / LMG 22953 / PM1), this protein is 3-methyl-2-oxobutanoate hydroxymethyltransferase 1.